Here is a 243-residue protein sequence, read N- to C-terminus: tRNA (guanine-N(1)-)-methyltransferase (243 aa).

Residues G123 and 143–148 (LGDFVM) contribute to the S-adenosyl-L-methionine site.

This sequence belongs to the RNA methyltransferase TrmD family. Homodimer.

It is found in the cytoplasm. It carries out the reaction guanosine(37) in tRNA + S-adenosyl-L-methionine = N(1)-methylguanosine(37) in tRNA + S-adenosyl-L-homocysteine + H(+). Its function is as follows. Specifically methylates guanosine-37 in various tRNAs. The polypeptide is tRNA (guanine-N(1)-)-methyltransferase (Ruegeria pomeroyi (strain ATCC 700808 / DSM 15171 / DSS-3) (Silicibacter pomeroyi)).